The sequence spans 263 residues: 5'-nucleotidase SurE (263 aa).

A divalent metal cation contacts are provided by Asp11, Asp12, Ser42, and Asn96.

It belongs to the SurE nucleotidase family. A divalent metal cation serves as cofactor.

The protein localises to the cytoplasm. It catalyses the reaction a ribonucleoside 5'-phosphate + H2O = a ribonucleoside + phosphate. Nucleotidase that shows phosphatase activity on nucleoside 5'-monophosphates. This is 5'-nucleotidase SurE from Methanocorpusculum labreanum (strain ATCC 43576 / DSM 4855 / Z).